Reading from the N-terminus, the 235-residue chain is tRNA1(Val) (adenine(37)-N6)-methyltransferase (235 aa).

Belongs to the methyltransferase superfamily. tRNA (adenine-N(6)-)-methyltransferase family.

Its subcellular location is the cytoplasm. It carries out the reaction adenosine(37) in tRNA1(Val) + S-adenosyl-L-methionine = N(6)-methyladenosine(37) in tRNA1(Val) + S-adenosyl-L-homocysteine + H(+). Its function is as follows. Specifically methylates the adenine in position 37 of tRNA(1)(Val) (anticodon cmo5UAC). The chain is tRNA1(Val) (adenine(37)-N6)-methyltransferase from Flavobacterium johnsoniae (strain ATCC 17061 / DSM 2064 / JCM 8514 / BCRC 14874 / CCUG 350202 / NBRC 14942 / NCIMB 11054 / UW101) (Cytophaga johnsonae).